Reading from the N-terminus, the 46-residue chain is Mu-segestritoxin-Sf1f (46 aa).

4 cysteine pairs are disulfide-bonded: C3–C19, C10–C22, C18–C42, and C24–C40. The segment at 31–33 (RPW) is keys region for toxin activity.

It belongs to the neurotoxin 16 (SFI) family. In terms of tissue distribution, expressed by the venom gland.

Its subcellular location is the secreted. In terms of biological role, insecticidal toxin. It inhibits insect voltage-gated sodium channels (Nav) by partially blocking the channel pore in DUM neurons from the American cockroach, not by acting as a gating modifier. The inhibition is only partially reversible after prolonged washout. In vivo, the toxin causes flaccid paralysis followed by death when injected into Heliothis virescens larvae. It also causes uncoordinated movements followed by full paralysis to sheep blowflies (Lucilia cuprina). When the toxin is fused to snowdrop lectin, it is orally active against larvae of the tomato moth (Laconobia oleracea), the rice brown planthopper (Nilaparvata lugens), and the peach-potato aphid (Myzus persicae). The sequence is that of Mu-segestritoxin-Sf1f from Segestria florentina (Tube-web spider).